Here is a 192-residue protein sequence, read N- to C-terminus: Glycerol-3-phosphate acyltransferase (192 aa).

Transmembrane regions (helical) follow at residues 3–23 (ALFL…EVIA), 51–71 (YGVL…LIAV), 80–100 (VLTF…FFGF), 112–132 (VVFA…LGIF), and 149–169 (AFLF…AIVI).

Belongs to the PlsY family. Probably interacts with PlsX.

The protein resides in the cell inner membrane. It catalyses the reaction an acyl phosphate + sn-glycerol 3-phosphate = a 1-acyl-sn-glycero-3-phosphate + phosphate. Its pathway is lipid metabolism; phospholipid metabolism. Catalyzes the transfer of an acyl group from acyl-phosphate (acyl-PO(4)) to glycerol-3-phosphate (G3P) to form lysophosphatidic acid (LPA). This enzyme utilizes acyl-phosphate as fatty acyl donor, but not acyl-CoA or acyl-ACP. The polypeptide is Glycerol-3-phosphate acyltransferase (Aquifex aeolicus (strain VF5)).